The sequence spans 151 residues: Globin (151 aa).

In terms of domain architecture, Globin spans 2 to 151 (SLSDADKKAL…AAFNETLKKA (150 aa)). H100 contacts heme b.

It belongs to the globin family.

In Biomphalaria glabrata (Bloodfluke planorb), this protein is Globin.